The following is a 370-amino-acid chain: DNA replication and repair protein RecF (370 aa).

ATP is bound at residue 30 to 37; it reads GENAQGKT.

It belongs to the RecF family. As to quaternary structure, recruited to foci following DNA damage; probably interacts with RecO.

It is found in the cytoplasm. The protein resides in the nucleoid. The RecF protein is involved in DNA metabolism; it is required for DNA replication and normal SOS inducibility. RecF binds preferentially to single-stranded, linear DNA. It also seems to bind ATP. Is recruited to repair centers, foci that are the site of double-strand DNA break(s) after RecN and RecO; recruitment may depend on RecO. A positive modulator of RecA. This is DNA replication and repair protein RecF from Bacillus subtilis (strain 168).